The chain runs to 795 residues: MKFSELWLREWVNPAISSDALSEQITMAGLEVDGVEPVAGAFHGVVVGEVVECAQHPNADKLRVTKVNVGGDRLLDIVCGAPNCRQGLKVAVATVGAVLPGDFKIKAAKLRGEPSEGMLCSFSELGISDDHSGIIELPADAPLGTDIREYLKLDDNTIEISVTPNRADCLGILGVARDVAVLNELALTAPATEPVTATIADRFPIQVDATEACPRYLGRVVKGINVKAATPLWMREKLRRCGIRSIDPVVDVTNYVLLELGQPMHAFDLNRLEGGIVVRMAKEGETLRLLDGTDATLSADTLVIADHQKALAMGGIFGGEHSGVNGETQDVLLECAYFNPLSITGRARRYGLHTDASHRYERGVDPALQHQAMERATRLLLDICGGEAGPVVEAVSEKDLPARATIALRRDKLDRLIGHVISDEKVSDILNRLGCQVTQTADGWQAVAPSWRFDMAIEEDLVEEVARVYGYNNIPNIPTQAPLKMTQHREADLALKRVKTLLVDHGFQEAITYSFVDPKIQSLIHPGEDALILPSPISVEMSAMRLSLWSGLLGAVVHNQNRQQSRLRLFESGLRFVPDQRADLGVRQETMLAGVITGTRYEEHWDLARQAVDFYDLKGDLEAVLALTGKLSVLEFRAESHPALHPGQTAAIYLAGERIGYIGVIHPELERKLDLNGRTVVFEVLWDKLAERVVPEAADISRFPANRRDIAVVVAESVPAGDVLAECKKVGANQLVGVNLFDVYRGKGVAEGYKSLAISLVLQDTARTLAEEEIAATVAQCVAALKQRFQASLRD.

The tRNA-binding domain occupies 39 to 148; sequence AGAFHGVVVG…ADAPLGTDIR (110 aa). In terms of domain architecture, B5 spans 401–476; that stretch reads PARATIALRR…RVYGYNNIPN (76 aa). Mg(2+) contacts are provided by aspartate 454, aspartate 460, glutamate 463, and glutamate 464. The 94-residue stretch at 701–794 folds into the FDX-ACB domain; sequence SRFPANRRDI…LKQRFQASLR (94 aa).

It belongs to the phenylalanyl-tRNA synthetase beta subunit family. Type 1 subfamily. Tetramer of two alpha and two beta subunits. Requires Mg(2+) as cofactor.

Its subcellular location is the cytoplasm. The enzyme catalyses tRNA(Phe) + L-phenylalanine + ATP = L-phenylalanyl-tRNA(Phe) + AMP + diphosphate + H(+). The polypeptide is Phenylalanine--tRNA ligase beta subunit (pheT) (Dickeya dadantii (strain 3937) (Erwinia chrysanthemi (strain 3937))).